We begin with the raw amino-acid sequence, 117 residues long: uncharacterized protein (117 aa).

The protein resides in the cytoplasm. The protein localises to the nucleus. This is an uncharacterized protein from Schizosaccharomyces pombe (strain 972 / ATCC 24843) (Fission yeast).